Reading from the N-terminus, the 432-residue chain is Enolase (432 aa).

Glutamine 167 contributes to the (2R)-2-phosphoglycerate binding site. Glutamate 209 acts as the Proton donor in catalysis. Aspartate 246, glutamate 289, and aspartate 316 together coordinate Mg(2+). (2R)-2-phosphoglycerate contacts are provided by lysine 341, arginine 370, serine 371, and lysine 392. Residue lysine 341 is the Proton acceptor of the active site.

Belongs to the enolase family. Mg(2+) is required as a cofactor.

It localises to the cytoplasm. The protein localises to the secreted. The protein resides in the cell surface. It carries out the reaction (2R)-2-phosphoglycerate = phosphoenolpyruvate + H2O. Its pathway is carbohydrate degradation; glycolysis; pyruvate from D-glyceraldehyde 3-phosphate: step 4/5. Catalyzes the reversible conversion of 2-phosphoglycerate (2-PG) into phosphoenolpyruvate (PEP). It is essential for the degradation of carbohydrates via glycolysis. The polypeptide is Enolase (Petrotoga mobilis (strain DSM 10674 / SJ95)).